Reading from the N-terminus, the 361-residue chain is Phospho-N-acetylmuramoyl-pentapeptide-transferase (361 aa).

The next 10 helical transmembrane spans lie at 21–41 (YLTV…LWIG), 74–94 (MGGI…ANLA), 97–117 (YVWF…VDDY), 132–152 (WKYF…YAIG), 168–188 (VMPQ…VGTG), 199–219 (GLAI…AWAT), 239–259 (LVIF…FNTY), 264–284 (FMGD…AVLV), 288–308 (FLLV…ILQV), and 339–359 (VIIR…ITLK).

Belongs to the glycosyltransferase 4 family. MraY subfamily. Mg(2+) is required as a cofactor.

It is found in the cell inner membrane. The catalysed reaction is UDP-N-acetyl-alpha-D-muramoyl-L-alanyl-gamma-D-glutamyl-meso-2,6-diaminopimeloyl-D-alanyl-D-alanine + di-trans,octa-cis-undecaprenyl phosphate = di-trans,octa-cis-undecaprenyl diphospho-N-acetyl-alpha-D-muramoyl-L-alanyl-D-glutamyl-meso-2,6-diaminopimeloyl-D-alanyl-D-alanine + UMP. It participates in cell wall biogenesis; peptidoglycan biosynthesis. Catalyzes the initial step of the lipid cycle reactions in the biosynthesis of the cell wall peptidoglycan: transfers peptidoglycan precursor phospho-MurNAc-pentapeptide from UDP-MurNAc-pentapeptide onto the lipid carrier undecaprenyl phosphate, yielding undecaprenyl-pyrophosphoryl-MurNAc-pentapeptide, known as lipid I. In Histophilus somni (strain 129Pt) (Haemophilus somnus), this protein is Phospho-N-acetylmuramoyl-pentapeptide-transferase.